Reading from the N-terminus, the 162-residue chain is NADH-quinone oxidoreductase subunit I (162 aa).

4Fe-4S ferredoxin-type domains are found at residues 54-83 (RRYENGEERCIACKLCEAVCPALAITIESE) and 93-122 (TRYDIDLTKCIFCGFCEESCPVDSIVETHI). Residues C63, C66, C69, C73, C102, C105, C108, and C112 each contribute to the [4Fe-4S] cluster site.

This sequence belongs to the complex I 23 kDa subunit family. NDH-1 is composed of 14 different subunits. Subunits NuoA, H, J, K, L, M, N constitute the membrane sector of the complex. [4Fe-4S] cluster serves as cofactor.

The protein resides in the cell inner membrane. The enzyme catalyses a quinone + NADH + 5 H(+)(in) = a quinol + NAD(+) + 4 H(+)(out). NDH-1 shuttles electrons from NADH, via FMN and iron-sulfur (Fe-S) centers, to quinones in the respiratory chain. The immediate electron acceptor for the enzyme in this species is believed to be ubiquinone. Couples the redox reaction to proton translocation (for every two electrons transferred, four hydrogen ions are translocated across the cytoplasmic membrane), and thus conserves the redox energy in a proton gradient. The sequence is that of NADH-quinone oxidoreductase subunit I from Paraburkholderia xenovorans (strain LB400).